A 468-amino-acid chain; its full sequence is ERO1-like protein alpha (468 aa).

A signal peptide spans 1 to 23 (MGRRWGFLIGFLVAVGLLGLGHG). 8 disulfide bridges follow: C35-C48, C37-C46, C85-C391, C94-C99, C94-C131, C99-C104, C208-C241, and C394-C397. Phosphoserine is present on residues S106, S143, and S145. Positions 187, 189, and 200 each coordinate FAD. FAD-binding residues include S252 and H255. An N-linked (GlcNAc...) asparagine glycan is attached at N280. Residues R287 and R300 each coordinate FAD. Residue N384 is glycosylated (N-linked (GlcNAc...) asparagine).

The protein belongs to the EROs family. Predominantly monomer. May function both as a monomer and a homodimer. Interacts with PDILT. Interacts with ERP44; the interaction results in retention of ERO1A in the endoplasmic reticulum. It depends on FAD as a cofactor. Post-translationally, the Cys-94/Cys-99 and Cys-394/Cys-397 disulfide bonds constitute the redox-active center. The Cys-94/Cys-99 disulfide bond may accept electron from P4HB and funnel them to the active site disulfide Cys-394/Cys-397. The regulatory Cys-99/Cys-104 disulfide bond stabilizes the other regulatory bond Cys-94/Cys-131. In terms of processing, phosphorylated on Ser-145 by FAM20C in the Golgi which increases its enzymatic activity. Phosphorylation is induced by lactation. It is also induced by hypoxia and reductive stress.

Its subcellular location is the endoplasmic reticulum membrane. The protein localises to the golgi apparatus lumen. The protein resides in the secreted. It is found in the cell projection. It localises to the dendrite. Its activity is regulated as follows. Enzyme activity is tightly regulated to prevent the accumulation of reactive oxygen species in the endoplasmic reticulum. Reversibly down-regulated by the formation of disulfide bonds between the active site Cys-94 and Cys-131, and between Cys-99 and Cys-104. Glutathione may be required to regulate its activity in the endoplasmic reticulum. Its function is as follows. Oxidoreductase involved in disulfide bond formation in the endoplasmic reticulum. Efficiently reoxidizes P4HB/PDI, the enzyme catalyzing protein disulfide formation, in order to allow P4HB to sustain additional rounds of disulfide formation. Following P4HB reoxidation, passes its electrons to molecular oxygen via FAD, leading to the production of reactive oxygen species (ROS) in the cell. Required for the proper folding of immunoglobulins. Plays an important role in ER stress-induced, CHOP-dependent apoptosis by activating the inositol 1,4,5-trisphosphate receptor IP3R1. In Bos taurus (Bovine), this protein is ERO1-like protein alpha.